Here is a 95-residue protein sequence, read N- to C-terminus: Co-chaperonin GroES (95 aa).

Belongs to the GroES chaperonin family. In terms of assembly, heptamer of 7 subunits arranged in a ring. Interacts with the chaperonin GroEL.

Its subcellular location is the cytoplasm. Functionally, together with the chaperonin GroEL, plays an essential role in assisting protein folding. The GroEL-GroES system forms a nano-cage that allows encapsulation of the non-native substrate proteins and provides a physical environment optimized to promote and accelerate protein folding. GroES binds to the apical surface of the GroEL ring, thereby capping the opening of the GroEL channel. The protein is Co-chaperonin GroES of Chlorobaculum tepidum (strain ATCC 49652 / DSM 12025 / NBRC 103806 / TLS) (Chlorobium tepidum).